The primary structure comprises 163 residues: Protein-export protein SecB (163 aa).

It belongs to the SecB family. Homotetramer, a dimer of dimers. One homotetramer interacts with 1 SecA dimer.

It is found in the cytoplasm. One of the proteins required for the normal export of preproteins out of the cell cytoplasm. It is a molecular chaperone that binds to a subset of precursor proteins, maintaining them in a translocation-competent state. It also specifically binds to its receptor SecA. The protein is Protein-export protein SecB of Shewanella woodyi (strain ATCC 51908 / MS32).